The chain runs to 222 residues: Disulfide bond formation protein D (222 aa).

The signal sequence occupies residues 1 to 36; the sequence is MKKKQQSSAKFAVILTVVVVVLLAAIVIINNKTEQG. The Thioredoxin domain occupies 37–220; sequence NDAVSGQPSI…IKETIEKELK (184 aa). A disulfide bridge connects residues C69 and C72.

It belongs to the thioredoxin family. DsbA subfamily.

It localises to the cell membrane. The protein resides in the membrane raft. Functionally, required for the stabilization, possibly via formation of a disulfide bond, of the obligatory competence protein ComGC. May be required for the stability of secreted proteins with disulfide bonds. Not required for sporulation. This Bacillus subtilis (strain 168) protein is Disulfide bond formation protein D (bdbD).